A 216-amino-acid chain; its full sequence is Large ribosomal subunit protein uL1 (216 aa).

The protein belongs to the universal ribosomal protein uL1 family.

This is Large ribosomal subunit protein uL1 from Caenorhabditis elegans.